A 102-amino-acid chain; its full sequence is MIGKEVTVQDIVLELSEVQPEVLPVDLFCEEELPNEDTEEELDTERIVFKVIAPCGCSHCEVKLRVFVQATEFGIRAFQQLLTGDLQLLCPECRGNCEHGGS.

The segment at 1–44 (MIGKEVTVQDIVLELSEVQPEVLPVDLFCEEELPNEDTEEELDT) is E7 terminal domain. The LXCXE motif; interaction with host RB1 and TMEM173/STING signature appears at 27–31 (LFCEE). Residues 55–93 (CGCSHCEVKLRVFVQATEFGIRAFQQLLTGDLQLLCPEC) fold into a zinc finger. Positions 75 to 83 (IRAFQQLLT) match the Nuclear export signal motif.

This sequence belongs to the papillomaviridae E7 protein family. Homodimer. Homooligomer. Interacts with host RB1; this interaction induces dissociation of RB1-E2F1 complex thereby disrupting RB1 activity. Interacts with host EP300; this interaction represses EP300 transcriptional activity. Interacts with protein E2; this interaction inhibits E7 oncogenic activity. Interacts with host TMEM173/STING; this interaction impairs the ability of TMEM173/STING to sense cytosolic DNA and promote the production of type I interferon (IFN-alpha and IFN-beta). Post-translationally, highly phosphorylated.

It localises to the host cytoplasm. The protein resides in the host nucleus. Its function is as follows. Plays a role in viral genome replication by driving entry of quiescent cells into the cell cycle. Stimulation of progression from G1 to S phase allows the virus to efficiently use the cellular DNA replicating machinery to achieve viral genome replication. E7 protein has both transforming and trans-activating activities. Induces the disassembly of the E2F1 transcription factor from RB1, with subsequent transcriptional activation of E2F1-regulated S-phase genes. Interferes with host histone deacetylation mediated by HDAC1 and HDAC2, leading to transcription activation. Also plays a role in the inhibition of both antiviral and antiproliferative functions of host interferon alpha. Interaction with host TMEM173/STING impairs the ability of TMEM173/STING to sense cytosolic DNA and promote the production of type I interferon (IFN-alpha and IFN-beta). The chain is Protein E7 from Human papillomavirus 36.